The primary structure comprises 458 residues: Adenylosuccinate synthetase (458 aa).

Residues G17–K23 and G45–T47 contribute to the GTP site. Catalysis depends on D18, which acts as the Proton acceptor. D18 and G45 together coordinate Mg(2+). Residues D18–K21, N43–H46, T137, R151, Q247, T262, and R330 each bind IMP. H46 serves as the catalytic Proton donor. V326–R332 contributes to the substrate binding site. GTP-binding positions include R332, K358–D360, and S440–S442.

It belongs to the adenylosuccinate synthetase family. In terms of assembly, homodimer. It depends on Mg(2+) as a cofactor.

Its subcellular location is the cytoplasm. It catalyses the reaction IMP + L-aspartate + GTP = N(6)-(1,2-dicarboxyethyl)-AMP + GDP + phosphate + 2 H(+). It functions in the pathway purine metabolism; AMP biosynthesis via de novo pathway; AMP from IMP: step 1/2. In terms of biological role, plays an important role in the de novo pathway of purine nucleotide biosynthesis. Catalyzes the first committed step in the biosynthesis of AMP from IMP. This Acidovorax ebreus (strain TPSY) (Diaphorobacter sp. (strain TPSY)) protein is Adenylosuccinate synthetase.